The primary structure comprises 957 residues: Melanoma-associated antigen E1 (957 aa).

The segment at 1–455 is disordered; that stretch reads MSLVSQNSRR…DSEGPKGAEG (455 aa). Composition is skewed to polar residues over residues 85 to 96 and 104 to 130; these read SEASSASGQPTI and VLPT…SVTL. Residues 138–162 show a composition bias toward low complexity; the sequence is TSRPPTSSEEPSTSVPPTASEVPST. Polar residues-rich tracts occupy residues 219-244, 268-320, 329-344, 364-380, and 414-428; these read GLST…TEGL, PSTS…STSV, STSV…STSV, LSTS…DTSV, and TLFS…NPSK. 2 consecutive MAGE domains span residues 491–690 and 745–936; these read MEQN…YNEA and LESK…YREA. Residues 743–957 form an interaction with DTNA region; it reads SRLESKARKL…HRQIFVHNFR (215 aa).

Interacts with DTNA. Interacts with TRIM28.

It localises to the cytoplasm. The protein localises to the perinuclear region. It is found in the nucleus. Its subcellular location is the cell membrane. Functionally, may enhance ubiquitin ligase activity of RING-type zinc finger-containing E3 ubiquitin-protein ligases. Proposed to act through recruitment and/or stabilization of the Ubl-conjugating enzyme (E2) at the E3:substrate complex. This Homo sapiens (Human) protein is Melanoma-associated antigen E1 (MAGEE1).